The chain runs to 174 residues: Gamma-crystallin A (174 aa).

2 consecutive Beta/gamma crystallin 'Greek key' domains span residues 2–40 (GKIT…RVDS) and 41–83 (GCWM…RSIP). Residues 84–87 (YTSS) are connecting peptide. Beta/gamma crystallin 'Greek key' domains lie at 88–128 (HRIR…HVLE) and 129–171 (GSWV…RRVM).

Belongs to the beta/gamma-crystallin family.

Functionally, crystallins are the dominant structural components of the vertebrate eye lens. The sequence is that of Gamma-crystallin A (Cryga) from Rattus norvegicus (Rat).